Here is a 268-residue protein sequence, read N- to C-terminus: Zinc finger protein SNAI2 (268 aa).

An SNAG domain region spans residues 1-20 (MPRSFLVKKHFNASKKPNYS). Residues 80–117 (SSSLGRVSPPPPSDTSSKDHSGSESPISDEEERLQSKL) form a disordered region. 4 consecutive C2H2-type zinc fingers follow at residues 128–150 (FQCNLCNKTYSTFSGLAKHKQLH), 159–181 (FSCKYCDKEYVSLGALKMHIRTH), 185–207 (CVCKICGKAFSRPWLLQGHIRTH), and 213–235 (FSCPHCNRAFADRSNLRAHLQTH). The segment at 241-264 (YQCKNCSKTFSRMSLLHKHEESGC) adopts a C2H2-type 5; atypical zinc-finger fold.

Belongs to the snail C2H2-type zinc-finger protein family. Interacts (via SNAG domain) with LIMD1 (via LIM domains), WTIP (via LIM domains) and AJUBA (via LIM domains). Interacts (via zinc fingers) with KPNA2, KPNB1, and TNPO1. May interact (via zinc fingers) with IPO7. Post-translationally, phosphorylated by GSK3B. Once phosphorylated, it becomes a target for ubiquitination. In terms of processing, ubiquitinated by the SCF(FBXO11) complex; ubiquitination requires previous GSK3B-mediated SNAI2 phosphorylation. Expressed in most adult human tissues, including spleen, thymus, prostate, testis, ovary, small intestine, colon, heart, brain, placenta, lung, liver, skeletal muscle, kidney and pancreas. Not detected in peripheral blood leukocyte. Expressed in the dermis and in all layers of the epidermis, with high levels of expression in the basal layers (at protein level). Expressed in osteoblasts (at protein level). Expressed in mesenchymal stem cells (at protein level). Expressed in breast tumor cells (at protein level).

It localises to the nucleus. Its subcellular location is the cytoplasm. Transcriptional repressor that modulates both activator-dependent and basal transcription. Involved in the generation and migration of neural crest cells. Plays a role in mediating RAF1-induced transcriptional repression of the TJ protein, occludin (OCLN) and subsequent oncogenic transformation of epithelial cells. Represses BRCA2 expression by binding to its E2-box-containing silencer and recruiting CTBP1 and HDAC1 in breast cells. In epidermal keratinocytes, binds to the E-box in ITGA3 promoter and represses its transcription. Involved in the regulation of ITGB1 and ITGB4 expression and cell adhesion and proliferation in epidermal keratinocytes. Binds to E-box2 domain of BSG and activates its expression during TGFB1-induced epithelial-mesenchymal transition (EMT) in hepatocytes. Represses E-Cadherin/CDH1 transcription via E-box elements. Involved in osteoblast maturation. Binds to RUNX2 and SOC9 promoters and may act as a positive and negative transcription regulator, respectively, in osteoblasts. Binds to CXCL12 promoter via E-box regions in mesenchymal stem cells and osteoblasts. Plays an essential role in TWIST1-induced EMT and its ability to promote invasion and metastasis. The chain is Zinc finger protein SNAI2 (SNAI2) from Homo sapiens (Human).